Consider the following 613-residue polypeptide: Pentatricopeptide repeat-containing protein At2g02750 (613 aa).

PPR repeat units follow at residues 30 to 64, 65 to 99, 101 to 126, 128 to 162, 163 to 193, 194 to 228, 230 to 264, 265 to 295, 297 to 331, 332 to 366, 367 to 401, 402 to 432, 435 to 469, 470 to 500, and 506 to 539; these read NKFT…GFFV, DVFT…GIAS, NAAV…ARVS, SGMN…GFEM, EVYV…VPHK, SVVT…SSEE, NDVT…EFQF, ETMV…LKDT, NLIS…GLKP, DSAT…VMVP, SLKC…AAER, DIFV…FEPK, DPVF…KVEP, SLAT…MQEE, and STEH…PSSS. The type E motif; degenerate stretch occupies residues 540 to 613; it reads VYSSLLGSCR…VKLPGLSLSG (74 aa).

Belongs to the PPR family. PCMP-E subfamily.

The polypeptide is Pentatricopeptide repeat-containing protein At2g02750 (PCMP-E22) (Arabidopsis thaliana (Mouse-ear cress)).